Consider the following 346-residue polypeptide: Elongation factor Ts (346 aa).

The involved in Mg(2+) ion dislocation from EF-Tu stretch occupies residues 80–83; it reads TDFV.

Belongs to the EF-Ts family.

The protein localises to the cytoplasm. Associates with the EF-Tu.GDP complex and induces the exchange of GDP to GTP. It remains bound to the aminoacyl-tRNA.EF-Tu.GTP complex up to the GTP hydrolysis stage on the ribosome. This Streptococcus thermophilus (strain CNRZ 1066) protein is Elongation factor Ts.